A 359-amino-acid chain; its full sequence is Glutamine synthetase (359 aa).

In terms of domain architecture, GS beta-grasp spans 28-107 (VMAEYIWIDG…VLAACYTADG (80 aa)). Residues 114–359 (HRDACAKLLE…GIITETMFEH (246 aa)) enclose the GS catalytic domain. Residue serine 273 is modified to Phosphoserine. A Phosphothreonine modification is found at threonine 303. At serine 305 the chain carries Phosphoserine.

The protein belongs to the glutamine synthetase family. As to quaternary structure, homooctamer.

It is found in the cytoplasm. The catalysed reaction is L-glutamate + NH4(+) + ATP = L-glutamine + ADP + phosphate + H(+). The sequence is that of Glutamine synthetase (gln1) from Schizosaccharomyces pombe (strain 972 / ATCC 24843) (Fission yeast).